A 166-amino-acid chain; its full sequence is UPF0303 protein Avin_29320 (166 aa).

Belongs to the UPF0303 family.

The protein is UPF0303 protein Avin_29320 of Azotobacter vinelandii (strain DJ / ATCC BAA-1303).